The following is a 219-amino-acid chain: MEKLIVGILFLSVLSGSVAQTDMKGKAFIFPQESSTAYVSLIPKVRKSLQNFTLCMKAFTDLTRPYSIFSYNTRTKDNEILLFVENIGEYMFYVGNLVAIFKAPTNLPDPVRICVNWESVSGIAEFWLNGKPLGRKGLNKGYTVGGDAMIIIGQEQDSFGGNFDAKQSFVGEIWDVSLWDHVVPLEKVSDSCNNGNLINWQALNYEDNGYVVIKPKLWP.

An N-terminal signal peptide occupies residues 1 to 19 (MEKLIVGILFLSVLSGSVA). The Pentraxin (PTX) domain maps to 24–219 (KGKAFIFPQE…YVVIKPKLWP (196 aa)). N-linked (GlcNAc...) asparagine glycosylation occurs at N51. A disulfide bridge links C55 with C114. D77, N78, E155, Q156, D157, and Q167 together coordinate Ca(2+).

Belongs to the pentraxin family. As to quaternary structure, homopentamer. Pentraxin (or pentaxin) have a discoid arrangement of 5 non-covalently bound subunits. It depends on Ca(2+) as a cofactor. In terms of tissue distribution, expressed in colon.

Its subcellular location is the secreted. The polypeptide is Mucosal pentraxin (Mptx1) (Mus musculus (Mouse)).